The sequence spans 94 residues: ATP synthase subunit c (94 aa).

2 helical membrane passes run 15–35 (VSVGIILAAAGLGSALGWGLI) and 61–81 (GGLMEAFPMIVLGMSMWFIFA).

The protein belongs to the ATPase C chain family. F-type ATPases have 2 components, F(1) - the catalytic core - and F(0) - the membrane proton channel. F(1) has five subunits: alpha(3), beta(3), gamma(1), delta(1), epsilon(1). F(0) has three main subunits: a(1), b(2) and c(10-14). The alpha and beta chains form an alternating ring which encloses part of the gamma chain. F(1) is attached to F(0) by a central stalk formed by the gamma and epsilon chains, while a peripheral stalk is formed by the delta and b chains.

The protein resides in the cell inner membrane. Functionally, f(1)F(0) ATP synthase produces ATP from ADP in the presence of a proton or sodium gradient. F-type ATPases consist of two structural domains, F(1) containing the extramembraneous catalytic core and F(0) containing the membrane proton channel, linked together by a central stalk and a peripheral stalk. During catalysis, ATP synthesis in the catalytic domain of F(1) is coupled via a rotary mechanism of the central stalk subunits to proton translocation. In terms of biological role, key component of the F(0) channel; it plays a direct role in translocation across the membrane. A homomeric c-ring of between 10-14 subunits forms the central stalk rotor element with the F(1) delta and epsilon subunits. The chain is ATP synthase subunit c from Nitrosococcus oceani (strain ATCC 19707 / BCRC 17464 / JCM 30415 / NCIMB 11848 / C-107).